A 489-amino-acid polypeptide reads, in one-letter code: Rhamnulokinase (489 aa).

13-17 (ASSGR) is a binding site for ATP. Residues cysteine 68 and cysteine 222 are joined by a disulfide bond. Substrate is bound by residues glycine 83 and 236–238 (HDT). The Proton acceptor role is filled by aspartate 237. Residue threonine 259 participates in ATP binding. A substrate-binding site is contributed by asparagine 296. Glutamine 304 provides a ligand contact to ATP. Cysteine 353 and cysteine 370 are joined by a disulfide. An ATP-binding site is contributed by glycine 402. Cysteine 413 and cysteine 417 are joined by a disulfide.

Belongs to the rhamnulokinase family. In terms of assembly, monomer. Requires Mg(2+) as cofactor.

It catalyses the reaction L-rhamnulose + ATP = L-rhamnulose 1-phosphate + ADP + H(+). It functions in the pathway carbohydrate degradation; L-rhamnose degradation; glycerone phosphate from L-rhamnose: step 2/3. Involved in the catabolism of L-rhamnose (6-deoxy-L-mannose). Catalyzes the transfer of the gamma-phosphate group from ATP to the 1-hydroxyl group of L-rhamnulose to yield L-rhamnulose 1-phosphate. This chain is Rhamnulokinase, found in Escherichia coli O17:K52:H18 (strain UMN026 / ExPEC).